The following is a 293-amino-acid chain: Pyridoxal 5'-phosphate synthase subunit PdxS (293 aa).

Asp-25 serves as a coordination point for D-ribose 5-phosphate. Lys-82 serves as the catalytic Schiff-base intermediate with D-ribose 5-phosphate. Asp-103 serves as a coordination point for D-ribulose 5-phosphate. Position 154 (Gly-154) interacts with D-ribose 5-phosphate. Arg-166 is a binding site for D-glyceraldehyde 3-phosphate. D-ribose 5-phosphate-binding positions include Gly-215 and 236-237 (GS).

This sequence belongs to the PdxS/SNZ family. As to quaternary structure, homohexamer and homododecamer. In the presence of PdxT, forms a dodecamer of heterodimers.

It carries out the reaction aldehydo-D-ribose 5-phosphate + D-glyceraldehyde 3-phosphate + L-glutamine = pyridoxal 5'-phosphate + L-glutamate + phosphate + 3 H2O + H(+). It participates in cofactor biosynthesis; pyridoxal 5'-phosphate biosynthesis. In terms of biological role, catalyzes the formation of pyridoxal 5'-phosphate from ribose 5-phosphate (RBP), glyceraldehyde 3-phosphate (G3P) and ammonia. The ammonia is provided by the PdxT subunit. Can also use ribulose 5-phosphate and dihydroxyacetone phosphate as substrates, resulting from enzyme-catalyzed isomerization of RBP and G3P, respectively. This is Pyridoxal 5'-phosphate synthase subunit PdxS from Thermotoga maritima (strain ATCC 43589 / DSM 3109 / JCM 10099 / NBRC 100826 / MSB8).